We begin with the raw amino-acid sequence, 970 residues long: Rho GTPase-activating protein gacK (970 aa).

The signal sequence occupies residues 1 to 20 (MTLVYEKSSFVLIMAQIAEA). Disordered stretches follow at residues 30 to 49 (SNDL…SAAI), 258 to 285 (STCS…INQN), 312 to 446 (EITI…FSPT), 487 to 550 (STSN…NNNN), and 860 to 886 (TASS…NDDP). Low complexity-rich tracts occupy residues 35–49 (STSA…SAAI) and 258–269 (STCSLSSNASNN). Pro residues predominate over residues 321–333 (IPLPPQSSSPPPT). Over residues 334–383 (RNNQSSPSPSSPQQQNIMPTPPSTSLTPPQSPTLSPSSSTHSTPTQTTTT) the composition is skewed to low complexity. Residues 392–406 (PSTISQNNARKTQIP) show a composition bias toward polar residues. The segment covering 407-426 (TTTTTTTTTTTTTSTTSTTS) has biased composition (low complexity). Residues 427–446 (PNPVVNNKNLNTPSSSFSPT) show a composition bias toward polar residues. Positions 754 to 970 (IEDSELVEDN…LELIQFNKSL (217 aa)) constitute a Rho-GAP domain. Low complexity predominate over residues 860–885 (TASSAATANSSSSGSGNGNSSPNNDD).

It is found in the cytoplasm. In terms of biological role, rho GTPase-activating protein involved in the signal transduction pathway. The sequence is that of Rho GTPase-activating protein gacK (gacK) from Dictyostelium discoideum (Social amoeba).